A 396-amino-acid polypeptide reads, in one-letter code: S-adenosylmethionine synthase 1 (396 aa).

Glu13 lines the Mg(2+) pocket. Residue His19 participates in ATP binding. Glu47 is a K(+) binding site. L-methionine-binding residues include Glu60 and Gln103. Residues 171-173, 239-242, Asp250, 256-257, Ala273, Lys277, and Lys281 contribute to the ATP site; these read DGK, SGRF, and RK. Asp250 lines the L-methionine pocket. An L-methionine-binding site is contributed by Lys281.

Belongs to the AdoMet synthase family. Homotetramer. Requires Mn(2+) as cofactor. Mg(2+) serves as cofactor. The cofactor is Co(2+). It depends on K(+) as a cofactor.

It is found in the cytoplasm. The enzyme catalyses L-methionine + ATP + H2O = S-adenosyl-L-methionine + phosphate + diphosphate. Its pathway is amino-acid biosynthesis; S-adenosyl-L-methionine biosynthesis; S-adenosyl-L-methionine from L-methionine: step 1/1. Functionally, catalyzes the formation of S-adenosylmethionine from methionine and ATP. The reaction comprises two steps that are both catalyzed by the same enzyme: formation of S-adenosylmethionine (AdoMet) and triphosphate, and subsequent hydrolysis of the triphosphate. May be involved in the synthesis of betain in response to abiotic stress such as high salinity. This chain is S-adenosylmethionine synthase 1 (SAMS1), found in Beta vulgaris (Sugar beet).